The primary structure comprises 323 residues: Thioredoxin reductase (323 aa).

Residue Tyr42 to Ala49 participates in FAD binding. Cys143 and Cys146 form a disulfide bridge. Asp286 to Ala295 contributes to the FAD binding site.

Belongs to the class-II pyridine nucleotide-disulfide oxidoreductase family. As to quaternary structure, homodimer. FAD serves as cofactor.

Its subcellular location is the cytoplasm. The catalysed reaction is [thioredoxin]-dithiol + NADP(+) = [thioredoxin]-disulfide + NADPH + H(+). This Aquifex aeolicus (strain VF5) protein is Thioredoxin reductase (trxB).